The sequence spans 358 residues: 3-isopropylmalate dehydrogenase (358 aa).

76-89 is a binding site for NAD(+); it reads GPRWDNLTGAERPE. Residues Arg-96, Arg-106, Arg-135, and Asp-225 each contribute to the substrate site. 3 residues coordinate Mg(2+): Asp-225, Asp-249, and Asp-253. 283–295 provides a ligand contact to NAD(+); the sequence is GSAPDIAGQNKAN.

This sequence belongs to the isocitrate and isopropylmalate dehydrogenases family. LeuB type 1 subfamily. In terms of assembly, homodimer. Requires Mg(2+) as cofactor. Mn(2+) is required as a cofactor.

Its subcellular location is the cytoplasm. The enzyme catalyses (2R,3S)-3-isopropylmalate + NAD(+) = 4-methyl-2-oxopentanoate + CO2 + NADH. Its pathway is amino-acid biosynthesis; L-leucine biosynthesis; L-leucine from 3-methyl-2-oxobutanoate: step 3/4. Catalyzes the oxidation of 3-carboxy-2-hydroxy-4-methylpentanoate (3-isopropylmalate) to 3-carboxy-4-methyl-2-oxopentanoate. The product decarboxylates to 4-methyl-2 oxopentanoate. This is 3-isopropylmalate dehydrogenase from Oleidesulfovibrio alaskensis (strain ATCC BAA-1058 / DSM 17464 / G20) (Desulfovibrio alaskensis).